The chain runs to 406 residues: DNA primase large subunit PriL (406 aa).

[4Fe-4S] cluster-binding residues include C302, C375, C384, and C389.

Belongs to the eukaryotic-type primase large subunit family. As to quaternary structure, heterodimer of a small subunit (PriS) and a large subunit (PriL). The cofactor is [4Fe-4S] cluster.

In terms of biological role, regulatory subunit of DNA primase, an RNA polymerase that catalyzes the synthesis of short RNA molecules used as primers for DNA polymerase during DNA replication. Stabilizes and modulates the activity of the small subunit, increasing the rate of DNA synthesis, and conferring RNA synthesis capability. The DNA polymerase activity may enable DNA primase to also catalyze primer extension after primer synthesis. May also play a role in DNA repair. The sequence is that of DNA primase large subunit PriL from Methanopyrus kandleri (strain AV19 / DSM 6324 / JCM 9639 / NBRC 100938).